The primary structure comprises 1690 residues: Restin homolog (1690 aa).

Composition is skewed to polar residues over residues 1–11 (MSDDTSASGGT) and 39–51 (NIPT…TGIP). The tract at residues 1–105 (MSDDTSASGG…ESDDNLSSIN (105 aa)) is disordered. 2 positions are modified to phosphoserine: S64 and S67. A CAP-Gly 1 domain is found at 143-185 (GDTHFAAGEWAGVVLDEPNGKNDGCVSGKRYFQCEPKRGIFSR). A disordered region spans residues 195 to 227 (AGAQTPTSPLAKSSPDRSRTVSPTASIRSSMLR). A compositionally biased stretch (polar residues) spans 214 to 226 (TVSPTASIRSSML). S216 is subject to Phosphoserine. The 43-residue stretch at 260–302 (GETQFAPGNWCGVELDEPSGKNDGTVDDIRYFECKPKYGVFVP) folds into the CAP-Gly 2 domain. 3 positions are modified to phosphoserine: S309, S322, and S325. At T327 the chain carries Phosphothreonine. Phosphoserine is present on S328. T362 carries the post-translational modification Phosphothreonine. Coiled coils occupy residues 378 to 468 (QHVE…VSAT), 484 to 660 (GALQ…DMLR), 667 to 916 (EEKS…TKLK), 926 to 981 (LSSC…ELQA), 1001 to 1121 (ATGH…EAIQ), 1158 to 1549 (EADM…AQMN), and 1565 to 1600 (DIET…LETL). A disordered region spans residues 843-905 (QQAAASGEEG…GSLEEEAKKS (63 aa)). The span at 865-885 (QLKSQAEETQSELKSTQSNLE) shows a compositional bias: polar residues. Disordered stretches follow at residues 1031-1052 (QLQD…KEKS) and 1400-1419 (KLDE…NEIQ). Basic and acidic residues-rich tracts occupy residues 1040–1052 (TKLK…KEKS) and 1410–1419 (SQKKSHNEIQ). Residues 1635 to 1665 (TEDCPIQGSEDQDYSTPSSESNNNEKERKLP) form a disordered region. T1681 bears the Phosphothreonine mark. Phosphoserine is present on S1682.

Interacts with Lva. As to expression, specifically expressed at the tip of the furrow in cellularizing blastoderms. CLIP-190 and jar are coexpressed at several times in development and in a number of tissues, including embryonic axonal neuron processes and posterior pole.

Its subcellular location is the cytoplasm. The protein resides in the cytoskeleton. The protein localises to the golgi apparatus. It is found in the microtubule organizing center. It localises to the perinuclear region. Functionally, together CLIP-190 and jar may coordinate the interaction between the actin and microtubule cytoskeleton. May link endocytic vesicles to microtubules. May play a role in formation of furrows during cellularization. This is Restin homolog (CLIP-190) from Drosophila melanogaster (Fruit fly).